The sequence spans 149 residues: UPF0178 protein HEAR0259 (149 aa).

Belongs to the UPF0178 family.

The polypeptide is UPF0178 protein HEAR0259 (Herminiimonas arsenicoxydans).